A 442-amino-acid polypeptide reads, in one-letter code: Trigger factor (442 aa).

Residues 176 to 259 (GDFISLSLYV…VNAVIEISSP (84 aa)) enclose the PPIase FKBP-type domain.

Belongs to the FKBP-type PPIase family. Tig subfamily.

The protein resides in the cytoplasm. The catalysed reaction is [protein]-peptidylproline (omega=180) = [protein]-peptidylproline (omega=0). In terms of biological role, involved in protein export. Acts as a chaperone by maintaining the newly synthesized protein in an open conformation. Functions as a peptidyl-prolyl cis-trans isomerase. This Chlamydia trachomatis serovar D (strain ATCC VR-885 / DSM 19411 / UW-3/Cx) protein is Trigger factor (tig).